A 147-amino-acid chain; its full sequence is 3-dehydroquinate dehydratase (147 aa).

Tyrosine 24 functions as the Proton acceptor in the catalytic mechanism. Residues asparagine 73, histidine 79, and aspartate 86 each contribute to the substrate site. Catalysis depends on histidine 99, which acts as the Proton donor. Substrate contacts are provided by residues 100 to 101 and arginine 110; that span reads LS.

Belongs to the type-II 3-dehydroquinase family. Homododecamer.

It catalyses the reaction 3-dehydroquinate = 3-dehydroshikimate + H2O. It functions in the pathway metabolic intermediate biosynthesis; chorismate biosynthesis; chorismate from D-erythrose 4-phosphate and phosphoenolpyruvate: step 3/7. Its function is as follows. Catalyzes a trans-dehydration via an enolate intermediate. The sequence is that of 3-dehydroquinate dehydratase from Hyphomonas neptunium (strain ATCC 15444).